A 387-amino-acid polypeptide reads, in one-letter code: Cystathionine beta-lyase (387 aa).

Lysine 204 bears the N6-(pyridoxal phosphate)lysine mark.

This sequence belongs to the trans-sulfuration enzymes family. Homotetramer. It depends on pyridoxal 5'-phosphate as a cofactor.

It localises to the cytoplasm. It catalyses the reaction L,L-cystathionine + H2O = L-homocysteine + pyruvate + NH4(+). The catalysed reaction is an S-substituted L-cysteine + H2O = a thiol + pyruvate + NH4(+). It participates in amino-acid biosynthesis; L-methionine biosynthesis via de novo pathway; L-homocysteine from L-cystathionine: step 1/1. In terms of biological role, catalyzes the cleavage of cystathionine to homocysteine, pyruvate and ammonia during methionine biosynthesis. The protein is Cystathionine beta-lyase (metC) of Coxiella burnetii (strain RSA 493 / Nine Mile phase I).